We begin with the raw amino-acid sequence, 377 residues long: MKNNIITLTQSLIQRPSISPDDQGCQQLIAERLQAVGFKLEWLPFGDTLNLWATHGEGKCIAFAGHTDVVPIGNESQWTYLPFEARIVENMLYGRGAADMKGALAAMVIAAETFVKHLPNHQGKIALLITSDEEAAATNGTVKVVETLIKRNEKIDYCVVGEPSSATQFGDIIKNGRRGSITGNLYIQGVQGHVAYPHLADNPVHNALKFLDELTHYQWDKGNEFFPPTSLQIANIHAGTGSNNVIPGELYVQFNLRYCTEVTDEIIKTKVTEMLEKHKLTYRIDWNLSGKPFLTPQGKLVNATLEAVEKFTQIRPHLDTGGGTSDARFIATMGAEVVEFGPLNQTIHKVNECVNIDDLAKCGEIYYHILEKLFNEQ.

Residue His-66 coordinates Zn(2+). The active site involves Asp-68. Residue Asp-99 participates in Zn(2+) binding. Catalysis depends on Glu-133, which acts as the Proton acceptor. Zn(2+) is bound by residues Glu-134, Glu-162, and His-348.

This sequence belongs to the peptidase M20A family. DapE subfamily. Homodimer. Requires Zn(2+) as cofactor. Co(2+) serves as cofactor.

It catalyses the reaction N-succinyl-(2S,6S)-2,6-diaminopimelate + H2O = (2S,6S)-2,6-diaminopimelate + succinate. Its pathway is amino-acid biosynthesis; L-lysine biosynthesis via DAP pathway; LL-2,6-diaminopimelate from (S)-tetrahydrodipicolinate (succinylase route): step 3/3. Functionally, catalyzes the hydrolysis of N-succinyl-L,L-diaminopimelic acid (SDAP), forming succinate and LL-2,6-diaminopimelate (DAP), an intermediate involved in the bacterial biosynthesis of lysine and meso-diaminopimelic acid, an essential component of bacterial cell walls. The polypeptide is Succinyl-diaminopimelate desuccinylase (Histophilus somni (strain 129Pt) (Haemophilus somnus)).